Here is a 512-residue protein sequence, read N- to C-terminus: Alanine--glyoxylate aminotransferase 2, mitochondrial (512 aa).

A mitochondrion-targeting transit peptide spans methionine 1–threonine 39. An N6-acetyllysine modification is found at lysine 55. An N6-acetyllysine; alternate modification is found at lysine 69. Residue lysine 69 is modified to N6-succinyllysine; alternate. An N6-acetyllysine modification is found at lysine 82. Lysine 260 is subject to N6-acetyllysine; alternate. Lysine 260 is modified (N6-succinyllysine; alternate). Lysine 302 carries the post-translational modification N6-succinyllysine. Lysine 348 is modified (N6-(pyridoxal phosphate)lysine). An N6-acetyllysine; alternate mark is found at lysine 415 and lysine 418. An N6-succinyllysine; alternate mark is found at lysine 415 and lysine 418. Lysine 452 is subject to N6-acetyllysine.

The protein belongs to the class-III pyridoxal-phosphate-dependent aminotransferase family. Homotetramer. Pyridoxal 5'-phosphate serves as cofactor. In terms of tissue distribution, expressed in the liver, lung and kidney.

It is found in the mitochondrion. It catalyses the reaction glyoxylate + L-alanine = glycine + pyruvate. It carries out the reaction (R)-3-amino-2-methylpropanoate + pyruvate = 2-methyl-3-oxopropanoate + L-alanine. The catalysed reaction is 3-oxopropanoate + L-alanine = beta-alanine + pyruvate. The enzyme catalyses 2-oxobutanoate + L-alanine = (2S)-2-aminobutanoate + pyruvate. It catalyses the reaction N(omega),N(omega)-dimethyl-L-arginine + pyruvate = 5-(3,3-dimethylguanidino)-2-oxopentanoate + L-alanine. It carries out the reaction N(omega),N('omega)-dimethyl-L-arginine + pyruvate = 5-(3,3'-dimethylguanidino)-2-oxopentanoate + L-alanine. The catalysed reaction is N(omega),N(omega)-dimethyl-L-arginine + glyoxylate = 5-(3,3-dimethylguanidino)-2-oxopentanoate + glycine. The enzyme catalyses N(omega),N('omega)-dimethyl-L-arginine + glyoxylate = 5-(3,3'-dimethylguanidino)-2-oxopentanoate + glycine. It catalyses the reaction N(omega)-methyl-L-arginine + pyruvate = 5-(3-methylguanidino)-2-oxopentanoate + L-alanine. It carries out the reaction N(omega)-methyl-L-arginine + glyoxylate = 5-(3-methylguanidino)-2-oxopentanoate + glycine. The catalysed reaction is L-ornithine + pyruvate = 5-amino-2-oxopentanoate + L-alanine. The enzyme catalyses L-ornithine + glyoxylate = 5-amino-2-oxopentanoate + glycine. It catalyses the reaction (2S)-2-aminobutanoate + glyoxylate = 2-oxobutanoate + glycine. It carries out the reaction N(omega),N(omega)-dimethyl-L-arginine + oxaloacetate = 5-(3,3-dimethylguanidino)-2-oxopentanoate + L-aspartate. The catalysed reaction is oxaloacetate + L-alanine = L-aspartate + pyruvate. The enzyme catalyses N(omega),N(omega)-dimethyl-L-arginine + 2-oxobutanoate = 5-(3,3-dimethylguanidino)-2-oxopentanoate + (2S)-2-aminobutanoate. It catalyses the reaction 2-oxopentanoate + N(omega),N(omega)-dimethyl-L-arginine = 5-(3,3-dimethylguanidino)-2-oxopentanoate + L-2-aminopentanoate. It carries out the reaction 2-oxohexanoate + N(omega),N(omega)-dimethyl-L-arginine = L-2-aminohexanoate + 5-(3,3-dimethylguanidino)-2-oxopentanoate. With respect to regulation, inhibited by 5-fluorouracil and 6-fluorouracil. Inhibited by phenylhydrazine, hydroxylamine, l-amino-L-proline, para-chloromercuribenzoate and HgCl2. Functionally, multifunctional aminotransferase with a broad substrate specificity. Catalyzes the conversion of glyoxylate to glycine using alanine as the amino donor. Catalyzes metabolism of not L- but the D-isomer of D-beta-aminoisobutyric acid to generate 2-methyl-3-oxopropanoate and alanine. Catalyzes the transfer of the amino group from beta-alanine to pyruvate to yield L-alanine and 3-oxopropanoate. Can metabolize NG-monomethyl-L-arginine (NMMA), asymmetric NG,NG-dimethyl-L-arginine (ADMA) and symmetric NG,N'G-dimethyl-L-arginine (SDMA). ADMA is a potent inhibitor of nitric-oxide (NO) synthase, and this activity provides mechanism through which the kidney regulates blood pressure. The sequence is that of Alanine--glyoxylate aminotransferase 2, mitochondrial (Agxt2) from Rattus norvegicus (Rat).